Here is a 296-residue protein sequence, read N- to C-terminus: Lipoyl synthase (296 aa).

Cys-35, Cys-40, Cys-46, Cys-61, Cys-65, Cys-68, and Ser-274 together coordinate [4Fe-4S] cluster. Positions 47-263 constitute a Radical SAM core domain; the sequence is WSSKHVTVMI…KEAAYARGFL (217 aa).

Belongs to the radical SAM superfamily. Lipoyl synthase family. It depends on [4Fe-4S] cluster as a cofactor.

It localises to the cytoplasm. The catalysed reaction is [[Fe-S] cluster scaffold protein carrying a second [4Fe-4S](2+) cluster] + N(6)-octanoyl-L-lysyl-[protein] + 2 oxidized [2Fe-2S]-[ferredoxin] + 2 S-adenosyl-L-methionine + 4 H(+) = [[Fe-S] cluster scaffold protein] + N(6)-[(R)-dihydrolipoyl]-L-lysyl-[protein] + 4 Fe(3+) + 2 hydrogen sulfide + 2 5'-deoxyadenosine + 2 L-methionine + 2 reduced [2Fe-2S]-[ferredoxin]. The protein operates within protein modification; protein lipoylation via endogenous pathway; protein N(6)-(lipoyl)lysine from octanoyl-[acyl-carrier-protein]: step 2/2. In terms of biological role, catalyzes the radical-mediated insertion of two sulfur atoms into the C-6 and C-8 positions of the octanoyl moiety bound to the lipoyl domains of lipoate-dependent enzymes, thereby converting the octanoylated domains into lipoylated derivatives. This Neorickettsia sennetsu (strain ATCC VR-367 / Miyayama) (Ehrlichia sennetsu) protein is Lipoyl synthase.